Here is a 534-residue protein sequence, read N- to C-terminus: (E)-beta-farnesene synthase (534 aa).

Mg(2+) is bound by residues Asp287, Asp291, Asn431, Ser435, and Glu439. The DDXXD motif signature appears at 287-291 (DDMMD).

This sequence belongs to the terpene synthase family. Mg(2+) serves as cofactor. The cofactor is Co(2+). Mn(2+) is required as a cofactor.

The protein localises to the cytoplasm. It carries out the reaction (2E,6E)-farnesyl diphosphate = (E)-beta-farnesene + diphosphate. It participates in secondary metabolite biosynthesis; terpenoid biosynthesis. Sesquiterpene cyclase catalyzing the production of beta-farnesene and alpha-bergamotene in equal amounts from farnesyl diphosphate. Involved in indirect defense by producing volatile signals attracting natural enemies of herbivores. The polypeptide is (E)-beta-farnesene synthase (Zea mays subsp. mexicana (Mexican teosinte)).